Here is a 557-residue protein sequence, read N- to C-terminus: 2-succinyl-5-enolpyruvyl-6-hydroxy-3-cyclohexene-1-carboxylate synthase (557 aa).

This sequence belongs to the TPP enzyme family. MenD subfamily. As to quaternary structure, homodimer. Requires Mg(2+) as cofactor. Mn(2+) is required as a cofactor. It depends on thiamine diphosphate as a cofactor.

It carries out the reaction isochorismate + 2-oxoglutarate + H(+) = 5-enolpyruvoyl-6-hydroxy-2-succinyl-cyclohex-3-ene-1-carboxylate + CO2. It functions in the pathway quinol/quinone metabolism; 1,4-dihydroxy-2-naphthoate biosynthesis; 1,4-dihydroxy-2-naphthoate from chorismate: step 2/7. It participates in quinol/quinone metabolism; menaquinone biosynthesis. Catalyzes the thiamine diphosphate-dependent decarboxylation of 2-oxoglutarate and the subsequent addition of the resulting succinic semialdehyde-thiamine pyrophosphate anion to isochorismate to yield 2-succinyl-5-enolpyruvyl-6-hydroxy-3-cyclohexene-1-carboxylate (SEPHCHC). The protein is 2-succinyl-5-enolpyruvyl-6-hydroxy-3-cyclohexene-1-carboxylate synthase of Staphylococcus aureus (strain Mu3 / ATCC 700698).